The following is a 159-amino-acid chain: MNKRKEKGKSHSKRPVRNTPPRWVPFGPEEIKALIVELSKKGYGPSMIGIILRDQFGVPLVKPIVGKKLVKIMEEQGVAPPIPEDLFHLMKRAVRVRAHLAEHPKDKHSARGLMEIESKIRRLVKYYKRVGKLPPDWKYDPERARLLVQQYSALFESGA.

The segment covering 1–16 (MNKRKEKGKSHSKRPV) has biased composition (basic residues). The disordered stretch occupies residues 1 to 22 (MNKRKEKGKSHSKRPVRNTPPR).

This sequence belongs to the universal ribosomal protein uS15 family. As to quaternary structure, part of the 30S ribosomal subunit.

This chain is Small ribosomal subunit protein uS15, found in Ignicoccus hospitalis (strain KIN4/I / DSM 18386 / JCM 14125).